Consider the following 171-residue polypeptide: Crossover junction endodeoxyribonuclease RuvC (171 aa).

Residues aspartate 7, glutamate 66, and aspartate 138 contribute to the active site. Mg(2+) contacts are provided by aspartate 7, glutamate 66, and aspartate 138.

It belongs to the RuvC family. Homodimer which binds Holliday junction (HJ) DNA. The HJ becomes 2-fold symmetrical on binding to RuvC with unstacked arms; it has a different conformation from HJ DNA in complex with RuvA. In the full resolvosome a probable DNA-RuvA(4)-RuvB(12)-RuvC(2) complex forms which resolves the HJ. Mg(2+) serves as cofactor.

Its subcellular location is the cytoplasm. The catalysed reaction is Endonucleolytic cleavage at a junction such as a reciprocal single-stranded crossover between two homologous DNA duplexes (Holliday junction).. Its function is as follows. The RuvA-RuvB-RuvC complex processes Holliday junction (HJ) DNA during genetic recombination and DNA repair. Endonuclease that resolves HJ intermediates. Cleaves cruciform DNA by making single-stranded nicks across the HJ at symmetrical positions within the homologous arms, yielding a 5'-phosphate and a 3'-hydroxyl group; requires a central core of homology in the junction. The consensus cleavage sequence is 5'-(A/T)TT(C/G)-3'. Cleavage occurs on the 3'-side of the TT dinucleotide at the point of strand exchange. HJ branch migration catalyzed by RuvA-RuvB allows RuvC to scan DNA until it finds its consensus sequence, where it cleaves and resolves the cruciform DNA. In Francisella tularensis subsp. mediasiatica (strain FSC147), this protein is Crossover junction endodeoxyribonuclease RuvC.